A 392-amino-acid polypeptide reads, in one-letter code: Trans-2-enoyl-CoA reductase [NADH] (392 aa).

NAD(+)-binding positions include 74–75 (FE), 111–112 (DA), and 141–142 (LA). Tyrosine 227 provides a ligand contact to substrate. Tyrosine 237 acts as the Proton donor in catalysis. Residues lysine 246 and 276 to 278 (VVT) contribute to the NAD(+) site.

This sequence belongs to the TER reductase family. As to quaternary structure, monomer.

The catalysed reaction is a 2,3-saturated acyl-CoA + NAD(+) = a (2E)-enoyl-CoA + NADH + H(+). Its pathway is lipid metabolism; fatty acid biosynthesis. In terms of biological role, involved in the fatty acid synthesis (FAS II). Catalyzes the reduction of a carbon-carbon double bond in an enoyl moiety that is covalently linked to a coenzyme A (CoA). In Brachyspira hyodysenteriae (strain ATCC 49526 / WA1), this protein is Trans-2-enoyl-CoA reductase [NADH].